The following is a 484-amino-acid chain: Magnesium transporter MRS2-3 (484 aa).

Disordered stretches follow at residues 1–40 and 141–186; these read MRGA…GRKK and TKPQ…QSLE. Residues 10–24 are compositionally biased toward polar residues; the sequence is NFSTNPSTPNTGQPT. Residues 203–275 are a coiled coil; that stretch reads ACLEAASSSL…LLDDDEDMAE (73 aa). The disordered stretch occupies residues 286 to 320; sequence LEDSSNSSMNESDTFEVDLPQGDEDDRLPPEFASE. Positions 298-311 are enriched in acidic residues; sequence DTFEVDLPQGDEDD. Residues 416–436 form a helical membrane-spanning segment; the sequence is GVMLTTATLVMSAFIAVAGVF. The Required for magnesium transport activity signature appears at 437 to 439; the sequence is GMN. A helical membrane pass occupies residues 455 to 475; it reads FIWTVIGGSIGSICLYVGAIG.

The protein belongs to the CorA metal ion transporter (MIT) (TC 1.A.35.5) family. As to expression, expressed in the whole plant.

The protein localises to the membrane. Magnesium transporter that may mediate the influx of magnesium. In Arabidopsis thaliana (Mouse-ear cress), this protein is Magnesium transporter MRS2-3 (MRS2-3).